We begin with the raw amino-acid sequence, 163 residues long: Cyanate hydratase (163 aa).

Active-site residues include R103, E106, and S129.

This sequence belongs to the cyanase family.

The catalysed reaction is cyanate + hydrogencarbonate + 3 H(+) = NH4(+) + 2 CO2. In terms of biological role, catalyzes the reaction of cyanate with bicarbonate to produce ammonia and carbon dioxide. In Ajellomyces capsulatus (strain G186AR / H82 / ATCC MYA-2454 / RMSCC 2432) (Darling's disease fungus), this protein is Cyanate hydratase.